The following is a 285-amino-acid chain: CCR4-NOT transcription complex subunit 7 (285 aa).

D40, E42, D161, D230, and E278 together coordinate a divalent metal cation.

The protein belongs to the CAF1 family. In terms of assembly, component of the CCR4-NOT complex. Mn(2+) serves as cofactor. The cofactor is Mg(2+). Co(2+) is required as a cofactor.

It localises to the nucleus. The protein resides in the cytoplasm. The enzyme catalyses Exonucleolytic cleavage of poly(A) to 5'-AMP.. In terms of biological role, has 3'-5' poly(A) exoribonuclease activity for synthetic poly(A) RNA substrate. Catalytic component of the CCR4-NOT complex which is one of the major cellular mRNA deadenylases and is linked to various cellular processes including bulk mRNA degradation, miRNA-mediated repression, translational repression during translational initiation and general transcription regulation. During miRNA-mediated repression the complex also seems to act as translational repressor during translational initiation. Additional complex functions may be a consequence of its influence on mRNA expression. This is CCR4-NOT transcription complex subunit 7 (cnot7) from Xenopus tropicalis (Western clawed frog).